We begin with the raw amino-acid sequence, 124 residues long: Small ribosomal subunit protein uS13 (124 aa).

Positions 99 to 124 (PCRGQKTKTNARTCKGPKKTVANKKK) are disordered. Residues 113-124 (KGPKKTVANKKK) show a composition bias toward basic residues.

Belongs to the universal ribosomal protein uS13 family. As to quaternary structure, part of the 30S ribosomal subunit. Forms a loose heterodimer with protein S19. Forms two bridges to the 50S subunit in the 70S ribosome.

Its function is as follows. Located at the top of the head of the 30S subunit, it contacts several helices of the 16S rRNA. In the 70S ribosome it contacts the 23S rRNA (bridge B1a) and protein L5 of the 50S subunit (bridge B1b), connecting the 2 subunits; these bridges are implicated in subunit movement. Contacts the tRNAs in the A and P-sites. The protein is Small ribosomal subunit protein uS13 of Lachnospira eligens (strain ATCC 27750 / DSM 3376 / VPI C15-48 / C15-B4) (Eubacterium eligens).